We begin with the raw amino-acid sequence, 138 residues long: MATILVDVVSAEASIFSGPAKFVALPGESGELGILPGHTPLITRIQPGAVRIEKEDGSEEFVFVAGGILEVQPQHVTVLADTAIRGTDLDEAKAQEAKRAAEELMQNQSSDLDIARAQSELAVAAAQLAAIARLRRKK.

This sequence belongs to the ATPase epsilon chain family. In terms of assembly, F-type ATPases have 2 components, CF(1) - the catalytic core - and CF(0) - the membrane proton channel. CF(1) has five subunits: alpha(3), beta(3), gamma(1), delta(1), epsilon(1). CF(0) has three main subunits: a, b and c.

Its subcellular location is the cell inner membrane. Its function is as follows. Produces ATP from ADP in the presence of a proton gradient across the membrane. The sequence is that of ATP synthase epsilon chain from Cupriavidus pinatubonensis (strain JMP 134 / LMG 1197) (Cupriavidus necator (strain JMP 134)).